Consider the following 628-residue polypeptide: Siderophore iron transporter 1 (628 aa).

The next 14 membrane-spanning stretches (helical) occupy residues 68–88, 107–127, 132–152, 164–184, 194–214, 225–245, 285–305, 317–337, 354–374, 394–414, 420–440, 448–468, 488–508, and 559–579; these read IYRV…GLDG, LLST…IFFA, IFGR…GTII, VGGC…EVIA, LLAL…SGNV, GIGM…ICML, IIGM…FTLA, IIVP…LWEI, GIFF…MQGD, ITSL…FILI, KPFI…LVHY, SGII…TYVT, LYLA…GAVW, and KILC…AFML.

This sequence belongs to the major facilitator superfamily.

The protein resides in the endosome membrane. In terms of biological role, involved in the transport of siderophore ferrioxamine B and so has a role in iron homeostasis. The chain is Siderophore iron transporter 1 (SIT1) from Saccharomyces cerevisiae (strain ATCC 204508 / S288c) (Baker's yeast).